The primary structure comprises 354 residues: Probable L-ascorbate-6-phosphate lactonase UlaG (354 aa).

Belongs to the UlaG family. Requires a divalent metal cation as cofactor.

Its subcellular location is the cytoplasm. It catalyses the reaction L-ascorbate 6-phosphate + H2O = 3-dehydro-L-gulonate 6-phosphate. Its pathway is cofactor degradation; L-ascorbate degradation; D-xylulose 5-phosphate from L-ascorbate: step 1/4. Functionally, probably catalyzes the hydrolysis of L-ascorbate-6-P into 3-keto-L-gulonate-6-P. Is essential for L-ascorbate utilization under anaerobic conditions. This chain is Probable L-ascorbate-6-phosphate lactonase UlaG, found in Escherichia coli O139:H28 (strain E24377A / ETEC).